Reading from the N-terminus, the 198-residue chain is Ribonuclease HII (198 aa).

In terms of domain architecture, RNase H type-2 spans 10 to 198 (QLVAGVDEVG…PVKRALGLAS (189 aa)). Residues Asp16, Glu17, and Asp108 each contribute to the a divalent metal cation site.

This sequence belongs to the RNase HII family. Mn(2+) is required as a cofactor. Requires Mg(2+) as cofactor.

It localises to the cytoplasm. It carries out the reaction Endonucleolytic cleavage to 5'-phosphomonoester.. Functionally, endonuclease that specifically degrades the RNA of RNA-DNA hybrids. This Shigella dysenteriae serotype 1 (strain Sd197) protein is Ribonuclease HII.